A 317-amino-acid polypeptide reads, in one-letter code: Single myb histone 6 (317 aa).

An HTH myb-type domain is found at 1-61 (MGAPKQRWTS…KWRNMNVIVS (61 aa)). A DNA-binding region (H-T-H motif) is located at residues 28 to 57 (WRTILKDPEFSSTLCYRSNVDLKDKWRNMN). The 69-residue stretch at 121–189 (KSHRLDNIIM…KVNRKYRIAP (69 aa)) folds into the H15 domain. Residues 244 to 288 (VAAARAVAEAEAIMAEAEAAAKEAEAAEAEAQAAQAFAEAAFLTL) are a coiled coil.

This sequence belongs to the histone H1/H5 family. SMH subfamily. Forms a homodimer and heterodimers.

The protein localises to the nucleus. Its subcellular location is the chromosome. The protein resides in the nucleolus. It localises to the telomere. In terms of biological role, binds preferentially double-stranded telomeric repeats, but may also bind to the single telomeric strand. The protein is Single myb histone 6 (SMH6) of Zea mays (Maize).